Consider the following 210-residue polypeptide: ATP-dependent Clp protease proteolytic subunit 1 (210 aa).

The Nucleophile role is filled by Ser-106. The active site involves His-131.

The protein belongs to the peptidase S14 family. As to quaternary structure, fourteen ClpP subunits assemble into 2 heptameric rings which stack back to back to give a disk-like structure with a central cavity, resembling the structure of eukaryotic proteasomes.

It is found in the cytoplasm. It carries out the reaction Hydrolysis of proteins to small peptides in the presence of ATP and magnesium. alpha-casein is the usual test substrate. In the absence of ATP, only oligopeptides shorter than five residues are hydrolyzed (such as succinyl-Leu-Tyr-|-NHMec, and Leu-Tyr-Leu-|-Tyr-Trp, in which cleavage of the -Tyr-|-Leu- and -Tyr-|-Trp bonds also occurs).. Its function is as follows. Cleaves peptides in various proteins in a process that requires ATP hydrolysis. Has a chymotrypsin-like activity. Plays a major role in the degradation of misfolded proteins. The chain is ATP-dependent Clp protease proteolytic subunit 1 from Chelativorans sp. (strain BNC1).